The chain runs to 420 residues: Serine palmitoyltransferase (420 aa).

Polar residues predominate over residues 1 to 21 (MKHNLQDNLQGEQMANTNSNG). The segment at 1–25 (MKHNLQDNLQGEQMANTNSNGGKKP) is disordered. Pyridoxal 5'-phosphate contacts are provided by residues 132-133 (GM), histidine 233, threonine 261, and serine 263. Lysine 264 is modified (N6-(pyridoxal phosphate)lysine).

It belongs to the class-II pyridoxal-phosphate-dependent aminotransferase family. As to quaternary structure, homodimer. Pyridoxal 5'-phosphate serves as cofactor.

The protein localises to the cytoplasm. The protein resides in the cell inner membrane. It catalyses the reaction L-serine + hexadecanoyl-CoA + H(+) = 3-oxosphinganine + CO2 + CoA. It participates in lipid metabolism; sphingolipid metabolism. With respect to regulation, significantly inhibited by palmitoyl-CoA concentrations greater than 100 uM. Catalyzes the condensation of L-serine with palmitoyl-CoA (hexadecanoyl-CoA) to produce 3-oxosphinganine. In Bacteriovorax stolpii (Bdellovibrio stolpii), this protein is Serine palmitoyltransferase.